The sequence spans 265 residues: Imidazole glycerol phosphate synthase subunit HisF (265 aa).

Active-site residues include aspartate 12 and aspartate 131.

Belongs to the HisA/HisF family. Heterodimer of HisH and HisF.

The protein resides in the cytoplasm. The enzyme catalyses 5-[(5-phospho-1-deoxy-D-ribulos-1-ylimino)methylamino]-1-(5-phospho-beta-D-ribosyl)imidazole-4-carboxamide + L-glutamine = D-erythro-1-(imidazol-4-yl)glycerol 3-phosphate + 5-amino-1-(5-phospho-beta-D-ribosyl)imidazole-4-carboxamide + L-glutamate + H(+). It participates in amino-acid biosynthesis; L-histidine biosynthesis; L-histidine from 5-phospho-alpha-D-ribose 1-diphosphate: step 5/9. Its function is as follows. IGPS catalyzes the conversion of PRFAR and glutamine to IGP, AICAR and glutamate. The HisF subunit catalyzes the cyclization activity that produces IGP and AICAR from PRFAR using the ammonia provided by the HisH subunit. In Alkalilimnicola ehrlichii (strain ATCC BAA-1101 / DSM 17681 / MLHE-1), this protein is Imidazole glycerol phosphate synthase subunit HisF.